The following is a 198-amino-acid chain: Glycerol-3-phosphate acyltransferase (198 aa).

5 helical membrane-spanning segments follow: residues 2–22 (IIVIITVMVSFLCGSIPTGYL), 55–75 (MITQVMDILKGIIPVLLCMLI), 88–108 (YLSIIVIAVILGHDYTPFLGF), 118–138 (VGAFFLLAPAAVLAGAVVYFV), and 162–182 (IALRLPIEITVCAIIACGLLI).

This sequence belongs to the PlsY family. As to quaternary structure, probably interacts with PlsX.

It localises to the cell membrane. It catalyses the reaction an acyl phosphate + sn-glycerol 3-phosphate = a 1-acyl-sn-glycero-3-phosphate + phosphate. It participates in lipid metabolism; phospholipid metabolism. In terms of biological role, catalyzes the transfer of an acyl group from acyl-phosphate (acyl-PO(4)) to glycerol-3-phosphate (G3P) to form lysophosphatidic acid (LPA). This enzyme utilizes acyl-phosphate as fatty acyl donor, but not acyl-CoA or acyl-ACP. This is Glycerol-3-phosphate acyltransferase from Clostridium acetobutylicum (strain ATCC 824 / DSM 792 / JCM 1419 / IAM 19013 / LMG 5710 / NBRC 13948 / NRRL B-527 / VKM B-1787 / 2291 / W).